The chain runs to 906 residues: Disintegrin and metalloproteinase domain-containing protein 22 (906 aa).

Residues 1–25 (MQAAVAVSVPFLLLCVLGTCPPARC) form the signal peptide. A propeptide spanning residues 26–222 (GQAGDASLME…KFILKPRPKR (197 aa)) is cleaved from the precursor. N-linked (GlcNAc...) asparagine glycosylation occurs at Asn175. Residues 223–736 (SKRQLRRYPR…LSGNGVAGTN (514 aa)) lie on the Extracellular side of the membrane. The Peptidase M12B domain occupies 239 to 438 (KYIELMIVND…GGGACLFNKP (200 aa)). 17 disulfides stabilise this stretch: Cys349–Cys433, Cys392–Cys417, Cys394–Cys401, Cys447–Cys477, Cys458–Cys474, Cys460–Cys466, Cys473–Cys494, Cys485–Cys491, Cys490–Cys516, Cys503–Cys523, Cys510–Cys542, Cys535–Cys547, Cys554–Cys605, Cys569–Cys635, Cys583–Cys593, Cys600–Cys663, and Cys657–Cys668. Positions 444 to 531 (PPECGNGFIE…QCAPNIHKMD (88 aa)) constitute a Disintegrin domain. Asn519 carries an N-linked (GlcNAc...) asparagine glycan. N-linked (GlcNAc...) asparagine glycosylation is present at Asn634. Asn675 is a glycosylation site (N-linked (GlcNAc...) asparagine). Residues 675 to 712 (NFSTCLSSKEGTICSGNGVCSNELKCVCNRHWIGSDCN) form the EGF-like domain. Intrachain disulfides connect Cys679-Cys694, Cys688-Cys700, and Cys702-Cys711. The helical transmembrane segment at 737–757 (IIIGIIAGTILVLALILGITA) threads the bilayer. Over 758 to 906 (WGYKNYREQR…QSARLWETSI (149 aa)) the chain is Cytoplasmic. Residues 785-906 (YSDIPPGVST…QSARLWETSI (122 aa)) are disordered. Positions 793–810 (STNSASSSKKRSNGLSHS) are enriched in low complexity. A Phosphoserine modification is found at Ser810. Positions 811 to 829 (WSERIPDTKHISDICENGR) are enriched in basic and acidic residues. Ser834 carries the phosphoserine modification. The segment covering 842–853 (NKKKIRGKRFRP) has biased composition (basic residues). Phosphoserine is present on residues Ser857, Ser862, Ser866, and Ser870. Residues 862 to 877 (SPAKSPSSSTGSIASS) show a composition bias toward low complexity.

Interacts with LGI1. Interacts with DLG4/PSD95. Also binds LGI4. Interacts with KCNA2 and DLG2. Interacts with ADAM11. Interacts (via C-terminus) with YWHAB/14-3-3 beta. Interacts (via C-terminus) with YWHAZ/14-3-3 zeta. Post-translationally, the precursor is cleaved by a furin endopeptidase. In terms of tissue distribution, highly expressed in the brain and in some high-grade but not low-grade gliomas. Detected slightly or not at all in other tissues.

The protein localises to the cell membrane. The protein resides in the cell projection. It is found in the axon. Functionally, probable ligand for integrin in the brain. This is a non catalytic metalloprotease-like protein. Involved in regulation of cell adhesion and spreading and in inhibition of cell proliferation. Neuronal receptor for LGI1. The protein is Disintegrin and metalloproteinase domain-containing protein 22 (ADAM22) of Homo sapiens (Human).